A 748-amino-acid polypeptide reads, in one-letter code: Choline O-acetyltransferase (748 aa).

Residues 1–10 show a composition bias toward basic residues; it reads MGLRTAKKRG. The interval 1 to 89 is disordered; that stretch reads MGLRTAKKRG…EWCGAASAEA (89 aa). Residues 17 to 32 are compositionally biased toward basic and acidic residues; it reads WKREEGGGTRGRREVR. A compositionally biased stretch (gly residues) spans 40–53; it reads GGRGDPGDVGGPAG. 2 stretches are compositionally biased toward low complexity: residues 54 to 65 and 73 to 89; these read NPGCSPHPRAAT and HTPA…SAEA. Ser-125 carries the phosphoserine modification. The active-site Proton acceptor is His-442. At Ser-473 the chain carries Phosphoserine. CoA contacts are provided by residues 520–532, Ser-558, and Gln-659; that span reads GKTF…CSPD. Positions 727 to 748 are disordered; it reads PTESKPLATKEKATRPSQGHQP.

The protein belongs to the carnitine/choline acetyltransferase family.

It carries out the reaction choline + acetyl-CoA = acetylcholine + CoA. Catalyzes the reversible synthesis of acetylcholine (ACh) from acetyl CoA and choline at cholinergic synapses. The polypeptide is Choline O-acetyltransferase (CHAT) (Homo sapiens (Human)).